A 57-amino-acid chain; its full sequence is Alpha-conotoxin-like Sm1.2 (57 aa).

An N-terminal signal peptide occupies residues 1–16 (MFTVFLLVVLATTVVS). A propeptide spanning residues 17–42 (FPSDRESDGANDEARTDEPEEHGPDR) is cleaved from the precursor. Positions 17–46 (FPSDRESDGANDEARTDEPEEHGPDRNGCC) are disordered. Basic and acidic residues predominate over residues 19–41 (SDRESDGANDEARTDEPEEHGPD). 2 disulfides stabilise this stretch: Cys45–Cys51 and Cys46–Cys56. Cys56 carries the post-translational modification Cysteine amide.

The protein belongs to the conotoxin A superfamily. In terms of tissue distribution, expressed by the venom duct.

Its subcellular location is the secreted. Alpha-conotoxins act on postsynaptic membranes, they bind to the nicotinic acetylcholine receptors (nAChR) and thus inhibit them. This Conus stercusmuscarum (Fly-specked cone) protein is Alpha-conotoxin-like Sm1.2.